The following is a 218-amino-acid chain: MVFRRFVEVGRVAYVSFGPHAGKLVAIVDVIDQNRALVDGPCTRVRRQAMPFKCMQLTDFILKFPHSARQKYVRKAWEKADINTKWAATRWAKKIEARERKAKMTDFDRYKVMKAKKMRNRIIKNEVKKLQRAALLKASPKKAPVAKGAVAAAAAAAKVPAKKATAAGKKAAAQKAPAQKAPAQKAAGQKAAQPPKAQKGQKPPAQKAPAPKASGKKA.

N6-acetyllysine is present on lysine 79. An N6-acetyllysine; alternate modification is found at lysine 85. Position 85 is an N6-succinyllysine; alternate (lysine 85). A Glycyl lysine isopeptide (Lys-Gly) (interchain with G-Cter in SUMO2) cross-link involves residue lysine 124. Serine 139 carries the post-translational modification Phosphoserine. Residues 159 to 218 (VPAKKATAAGKKAAAQKAPAQKAPAQKAAGQKAAQPPKAQKGQKPPAQKAPAPKASGKKA) form a disordered region. A run of 6 repeats spans residues 174–178 (QKAPA), 179–183 (QKAPA), 184–188 (QKAAG), 189–193 (QKAAQ), 196–198 (KAQ), and 199–201 (KGQ). The tract at residues 174–193 (QKAPAQKAPAQKAAGQKAAQ) is 4 X 5 AA tandem repeats of Q-K-A-[PAS]-X. The segment at 196–201 (KAQKGQ) is 2 X 3 AA tandem repeats of K-[GA]-Q. Lysine 207 carries the post-translational modification N6-succinyllysine.

Belongs to the eukaryotic ribosomal protein eL14 family. As to quaternary structure, component of the large ribosomal subunit.

The protein localises to the cytoplasm. In terms of biological role, component of the large ribosomal subunit. The ribosome is a large ribonucleoprotein complex responsible for the synthesis of proteins in the cell. This chain is Large ribosomal subunit protein eL14 (RPL14), found in Oryctolagus cuniculus (Rabbit).